A 41-amino-acid polypeptide reads, in one-letter code: Minor histocompatibility protein HB-1 (41 aa).

A loss of recognition by cytotoxic T lymphocyte (CTL) region spans residues 9-17 (EEKRGSLHV).

As to quaternary structure, HB-1 forms a complex with MHC class I HLA-B44. As to expression, expressed in acute lymphoblastic leukemia B-cells and Epstein-Barr virus-transformed B-cells.

Its function is as follows. Precursor of the histocomplatibility antigen HB-1. More generally, minor histocomplatibility antigens (mHags) refer to immunogenic peptide which, when complexed with MHC, can generate an immune response after recognition by specific T-cells. The peptides are derived from polymorphic intracellular proteins, which are cleaved by normal pathways of antigen processing. The binding of these peptides to MHC class I or class II molecules and its expression on the cell surface can stimulate T-cell responses and thereby trigger graft rejection or graft-versus-host disease (GVHD) after hematopoietic stem cell transplantation from HLA-identical sibling donor. GVHD is a frequent complication after bone marrow transplantation (BMT), due to mismatch of minor histocomplatibility antigen in HLA-matched sibling marrow transplants. HB-1 is presented on the cell surface by MHC class I HLA-B44. This complex specifically elicits donor-cytotoxic T lymphocyte (CTL) reactivity in B-cell acute lymphoblastic leukemia (B-ALL) after treatment by HLA-identical allogenic bone marrow transplantation (BMT). It induces cell recognition and lysis by CTL. However, HB-1 restricted expression in B-ALL cells and not in normal tissues may allow a specific CTL reactivity against B-ALL without the risk of evoking graft-versus-host disease. The protein is Minor histocompatibility protein HB-1 (HMHB1) of Homo sapiens (Human).